Consider the following 191-residue polypeptide: Ribonuclease HII (191 aa).

Positions 7–191 constitute an RNase H type-2 domain; it reads ILMAGVDEVG…YSPVADLISK (185 aa). A divalent metal cation-binding residues include aspartate 13, glutamate 14, and aspartate 103.

The protein belongs to the RNase HII family. Mn(2+) serves as cofactor. Requires Mg(2+) as cofactor.

Its subcellular location is the cytoplasm. It catalyses the reaction Endonucleolytic cleavage to 5'-phosphomonoester.. In terms of biological role, endonuclease that specifically degrades the RNA of RNA-DNA hybrids. This chain is Ribonuclease HII, found in Legionella pneumophila (strain Corby).